Consider the following 144-residue polypeptide: L-fucose mutarotase (144 aa).

His-22 (proton donor) is an active-site residue. Substrate is bound by residues Asp-30, Arg-109, and 131-133; that span reads YGN.

This sequence belongs to the RbsD / FucU family. FucU mutarotase subfamily. In terms of assembly, homodecamer.

Its subcellular location is the cytoplasm. The enzyme catalyses alpha-L-fucose = beta-L-fucose. It participates in carbohydrate metabolism; L-fucose metabolism. Its function is as follows. Involved in the anomeric conversion of L-fucose. The polypeptide is L-fucose mutarotase (Haemophilus influenzae (strain PittGG)).